The primary structure comprises 1465 residues: DNA polymerase III PolC-type (1465 aa).

The 157-residue stretch at 427–583 (YVVFDVETTG…YDAEATGRLL (157 aa)) folds into the Exonuclease domain.

This sequence belongs to the DNA polymerase type-C family. PolC subfamily.

The protein resides in the cytoplasm. The enzyme catalyses DNA(n) + a 2'-deoxyribonucleoside 5'-triphosphate = DNA(n+1) + diphosphate. Required for replicative DNA synthesis. This DNA polymerase also exhibits 3' to 5' exonuclease activity. The polypeptide is DNA polymerase III PolC-type (Streptococcus pyogenes serotype M4 (strain MGAS10750)).